The primary structure comprises 461 residues: L-seryl-tRNA(Sec) selenium transferase (461 aa).

K294 is subject to N6-(pyridoxal phosphate)lysine.

Belongs to the SelA family. Requires pyridoxal 5'-phosphate as cofactor.

The protein resides in the cytoplasm. The enzyme catalyses L-seryl-tRNA(Sec) + selenophosphate + H(+) = L-selenocysteinyl-tRNA(Sec) + phosphate. It participates in aminoacyl-tRNA biosynthesis; selenocysteinyl-tRNA(Sec) biosynthesis; selenocysteinyl-tRNA(Sec) from L-seryl-tRNA(Sec) (bacterial route): step 1/1. Converts seryl-tRNA(Sec) to selenocysteinyl-tRNA(Sec) required for selenoprotein biosynthesis. This chain is L-seryl-tRNA(Sec) selenium transferase, found in Actinobacillus pleuropneumoniae serotype 5b (strain L20).